Here is a 199-residue protein sequence, read N- to C-terminus: Fe/S biogenesis protein NfuA (199 aa).

C151 and C154 together coordinate [4Fe-4S] cluster.

Belongs to the NfuA family. Homodimer. [4Fe-4S] cluster serves as cofactor.

Its function is as follows. Involved in iron-sulfur cluster biogenesis. Binds a 4Fe-4S cluster, can transfer this cluster to apoproteins, and thereby intervenes in the maturation of Fe/S proteins. Could also act as a scaffold/chaperone for damaged Fe/S proteins. The polypeptide is Fe/S biogenesis protein NfuA (Xylella fastidiosa (strain 9a5c)).